A 318-amino-acid polypeptide reads, in one-letter code: Pantothenate kinase (318 aa).

Residue 96–103 coordinates ATP; it reads GSVAVGKS.

Belongs to the prokaryotic pantothenate kinase family.

Its subcellular location is the cytoplasm. It carries out the reaction (R)-pantothenate + ATP = (R)-4'-phosphopantothenate + ADP + H(+). It functions in the pathway cofactor biosynthesis; coenzyme A biosynthesis; CoA from (R)-pantothenate: step 1/5. In Bradyrhizobium diazoefficiens (strain JCM 10833 / BCRC 13528 / IAM 13628 / NBRC 14792 / USDA 110), this protein is Pantothenate kinase.